The following is a 118-amino-acid chain: Large ribosomal subunit protein uL18 (118 aa).

It belongs to the universal ribosomal protein uL18 family. Part of the 50S ribosomal subunit; part of the 5S rRNA/L5/L18/L25 subcomplex. Contacts the 5S and 23S rRNAs.

Functionally, this is one of the proteins that bind and probably mediate the attachment of the 5S RNA into the large ribosomal subunit, where it forms part of the central protuberance. The sequence is that of Large ribosomal subunit protein uL18 from Phenylobacterium zucineum (strain HLK1).